The sequence spans 484 residues: Poly(A) RNA polymerase GLD2 (484 aa).

Phosphoserine occurs at positions 62 and 69. The segment at Phe-72 to His-97 is disordered. A Nuclear localization signal motif is present at residues Lys-76–Arg-92. Residues Arg-77–Arg-90 are compositionally biased toward basic and acidic residues. Position 95 is a phosphoserine (Ser-95). Asp-213 and Asp-215 together coordinate Mg(2+). In terms of domain architecture, PAP-associated spans Asn-386–Asn-440.

This sequence belongs to the DNA polymerase type-B-like family. GLD2 subfamily. As to quaternary structure, interacts with CPEB1, CPEB2, CPSF1 and PABPC1. Interacts with QKI isoform QKI7; promoting recruitment to miRNA miR-122 and miR-122 stabilization. Mg(2+) is required as a cofactor. The cofactor is Mn(2+). Expressed in brain. Within brain, it is expressed in cerebellum, hippocampus and medulla.

The protein resides in the cytoplasm. It is found in the nucleus. It carries out the reaction RNA(n) + ATP = RNA(n)-3'-adenine ribonucleotide + diphosphate. In terms of biological role, cytoplasmic poly(A) RNA polymerase that adds successive AMP monomers to the 3'-end of specific RNAs, forming a poly(A) tail. In contrast to the canonical nuclear poly(A) RNA polymerase, it only adds poly(A) to selected cytoplasmic mRNAs. Does not play a role in replication-dependent histone mRNA degradation. Adds a single nucleotide to the 3' end of specific miRNAs, monoadenylation stabilizes and prolongs the activity of some but not all miRNAs. This is Poly(A) RNA polymerase GLD2 from Homo sapiens (Human).